Consider the following 156-residue polypeptide: MPRRREVPKREILPDPKFGSQDVSKFINVIMQAGKKSVAERIVYGAFAQISGKAGKDPLEVFSSAVANVKPVVEVKSRRVGGANYQVPVEVRPSRRMALSMRWLREAARKRAEKSMAQRLAGELLEAAEGRGSAMKKREEVHRMAEANKAFSHYRF.

This sequence belongs to the universal ribosomal protein uS7 family. Part of the 30S ribosomal subunit. Contacts proteins S9 and S11.

Functionally, one of the primary rRNA binding proteins, it binds directly to 16S rRNA where it nucleates assembly of the head domain of the 30S subunit. Is located at the subunit interface close to the decoding center, probably blocks exit of the E-site tRNA. The chain is Small ribosomal subunit protein uS7 from Aromatoleum aromaticum (strain DSM 19018 / LMG 30748 / EbN1) (Azoarcus sp. (strain EbN1)).